Here is a 337-residue protein sequence, read N- to C-terminus: tRNA N6-adenosine threonylcarbamoyltransferase (337 aa).

Fe cation contacts are provided by histidine 111 and histidine 115. Substrate is bound by residues 134–138, aspartate 167, glycine 180, and asparagine 272; that span reads LVSGG. Residue aspartate 300 coordinates Fe cation.

Belongs to the KAE1 / TsaD family. Fe(2+) is required as a cofactor.

It localises to the cytoplasm. The catalysed reaction is L-threonylcarbamoyladenylate + adenosine(37) in tRNA = N(6)-L-threonylcarbamoyladenosine(37) in tRNA + AMP + H(+). Required for the formation of a threonylcarbamoyl group on adenosine at position 37 (t(6)A37) in tRNAs that read codons beginning with adenine. Is involved in the transfer of the threonylcarbamoyl moiety of threonylcarbamoyl-AMP (TC-AMP) to the N6 group of A37, together with TsaE and TsaB. TsaD likely plays a direct catalytic role in this reaction. The sequence is that of tRNA N6-adenosine threonylcarbamoyltransferase from Aeromonas salmonicida (strain A449).